A 1056-amino-acid chain; its full sequence is Carbamoyl phosphate synthase large chain (1056 aa).

Residues 1–399 (MKIDVSKVIV…AFQKAIRMLD (399 aa)) form a carboxyphosphate synthetic domain region. 12 residues coordinate ATP: R127, R167, G173, G174, K206, L208, E213, G239, V240, H241, Q282, and E296. Positions 131–325 (QKTMKKVGLP…LAYIATKLAI (195 aa)) constitute an ATP-grasp 1 domain. Mg(2+) contacts are provided by Q282, E296, and N298. Residues Q282, E296, and N298 each coordinate Mn(2+). The tract at residues 400–536 (IGDELIGKYY…VTYDGVENDI (137 aa)) is oligomerization domain. The interval 537–919 (PKPKKPSILV…LKSWLSVKPN (383 aa)) is carbamoyl phosphate synthetic domain. One can recognise an ATP-grasp 2 domain in the interval 661–849 (SKLLEKLGIP…LMELSAQAVL (189 aa)). ATP is bound by residues R697, K736, I738, E742, G766, V767, H768, S769, Q809, and E820. Mg(2+) contacts are provided by Q809, E820, and N822. 3 residues coordinate Mn(2+): Q809, E820, and N822. Residues 915 to 1043 (SVKPNELPKT…REYWIRKIEE (129 aa)) form the MGS-like domain. Residues 920 to 1056 (ELPKTSALIY…EYAASVVLRR (137 aa)) form an allosteric domain region.

Belongs to the CarB family. Composed of two chains; the small (or glutamine) chain promotes the hydrolysis of glutamine to ammonia, which is used by the large (or ammonia) chain to synthesize carbamoyl phosphate. Tetramer of heterodimers (alpha,beta)4. Requires Mg(2+) as cofactor. The cofactor is Mn(2+).

The catalysed reaction is hydrogencarbonate + L-glutamine + 2 ATP + H2O = carbamoyl phosphate + L-glutamate + 2 ADP + phosphate + 2 H(+). It carries out the reaction hydrogencarbonate + NH4(+) + 2 ATP = carbamoyl phosphate + 2 ADP + phosphate + 2 H(+). Its pathway is amino-acid biosynthesis; L-arginine biosynthesis; carbamoyl phosphate from bicarbonate: step 1/1. It functions in the pathway pyrimidine metabolism; UMP biosynthesis via de novo pathway; (S)-dihydroorotate from bicarbonate: step 1/3. Large subunit of the glutamine-dependent carbamoyl phosphate synthetase (CPSase). CPSase catalyzes the formation of carbamoyl phosphate from the ammonia moiety of glutamine, carbonate, and phosphate donated by ATP, constituting the first step of 2 biosynthetic pathways, one leading to arginine and/or urea and the other to pyrimidine nucleotides. The large subunit (synthetase) binds the substrates ammonia (free or transferred from glutamine from the small subunit), hydrogencarbonate and ATP and carries out an ATP-coupled ligase reaction, activating hydrogencarbonate by forming carboxy phosphate which reacts with ammonia to form carbamoyl phosphate. The sequence is that of Carbamoyl phosphate synthase large chain from Pyrococcus furiosus (strain ATCC 43587 / DSM 3638 / JCM 8422 / Vc1).